Here is an 86-residue protein sequence, read N- to C-terminus: uncharacterized protein (86 aa).

This is an uncharacterized protein from Dictyostelium discoideum (Social amoeba).